The chain runs to 823 residues: DNA ligase (823 aa).

Residues aspartate 31 to aspartate 35 and serine 73 to glutamine 74 each bind NAD(+). The active-site N6-AMP-lysine intermediate is the lysine 100. NAD(+)-binding residues include arginine 121, glutamate 163, lysine 275, and lysine 296. Zn(2+) contacts are provided by cysteine 387, cysteine 390, cysteine 403, and cysteine 408. BRCT domains lie at glutamine 562–threonine 655, glutamate 654–valine 742, and histidine 741–threonine 823.

It belongs to the NAD-dependent DNA ligase family. LigA subfamily. The cofactor is Mg(2+). Requires Mn(2+) as cofactor.

The catalysed reaction is NAD(+) + (deoxyribonucleotide)n-3'-hydroxyl + 5'-phospho-(deoxyribonucleotide)m = (deoxyribonucleotide)n+m + AMP + beta-nicotinamide D-nucleotide.. In terms of biological role, DNA ligase that catalyzes the formation of phosphodiester linkages between 5'-phosphoryl and 3'-hydroxyl groups in double-stranded DNA using NAD as a coenzyme and as the energy source for the reaction. It is essential for DNA replication and repair of damaged DNA. The chain is DNA ligase from Treponema pallidum (strain Nichols).